A 208-amino-acid polypeptide reads, in one-letter code: Large ribosomal subunit protein uL3 (208 aa).

Residues 116 to 146 (GFQGAIKRHGQSRGPMAHGSRYHRRPGSMGP) are disordered.

It belongs to the universal ribosomal protein uL3 family. In terms of assembly, part of the 50S ribosomal subunit. Forms a cluster with proteins L14 and L19.

In terms of biological role, one of the primary rRNA binding proteins, it binds directly near the 3'-end of the 23S rRNA, where it nucleates assembly of the 50S subunit. The sequence is that of Large ribosomal subunit protein uL3 from Streptococcus mutans serotype c (strain ATCC 700610 / UA159).